The following is a 661-amino-acid chain: Methyl-accepting chemotaxis protein McpA (661 aa).

Residues 1–16 (MKKILQLIKQRSITRK) are Cytoplasmic-facing. The helical transmembrane segment at 17 to 37 (LLVSFLSILIIPVVILAIFAY) threads the bilayer. The Extracellular segment spans residues 38–281 (QSASSSLDRQ…IHEAAQPVLH (244 aa)). In terms of domain architecture, Cache spans 152 to 228 (ITDPYKTAST…QSGTELKGDW (77 aa)). A helical membrane pass occupies residues 282 to 302 (LALIVLAAAIIIGIIVMTLII). The HAMP domain occupies 303-355 (RSITTPLKQLVGSSKRISEGDLTETIDIRSKDELGELGKSFNNMASSLRSLIH). The Cytoplasmic segment spans residues 303-661 (RSITTPLKQL…RDMTKRFKIE (359 aa)). Residue Glu-370 is modified to Glutamate methyl ester (Glu). The Methyl-accepting transducer domain occupies 374-610 (SAAQTSKATE…EVSGASEHIA (237 aa)). Residues Gln-593 and Gln-594 each carry the deamidated glutamine modification. Glutamate methyl ester (Gln) is present on Gln-594. Glutamate methyl ester (Glu) occurs at positions 629 and 636.

Belongs to the methyl-accepting chemotaxis (MCP) protein family. In terms of assembly, interacts with FloT. In terms of processing, deamidated by CheD on Gln-593 and Gln-594, producing glutamate residues. The glutamate residues are then methylated. Other additional sites are deamidated and methylated as well.

It localises to the cell membrane. The protein localises to the membrane raft. In terms of biological role, chemotactic-signal transducers respond to changes in the concentration of attractants and repellents in the environment, transduce a signal from the outside to the inside of the cell, and facilitate sensory adaptation through the variation of the level of methylation. All amino acids serve as attractants in B.subtilis, they appear to cause an increase in the turnover methyl groups, leading to methylation of an unidentified acceptor, while repellents have been shown to cause a decrease in methyl group turnover. The methyl groups are added by a methyltransferase and removed by a methylesterase. McpA is required for taxis towards glucose and alpha-methylglucoside. The sequence is that of Methyl-accepting chemotaxis protein McpA (mcpA) from Bacillus subtilis (strain 168).